Here is a 602-residue protein sequence, read N- to C-terminus: GTP-binding protein 2 (602 aa).

The disordered stretch occupies residues 18-64; that stretch reads GPAMGGNLKARGAGGSSSCGGPKGKKKNGRNRGGKANNPPYLPPEAE. A compositionally biased stretch (gly residues) spans 29 to 39; that stretch reads GAGGSSSCGGP. Basic residues predominate over residues 40–50; that stretch reads KGKKKNGRNRG. Residues 170-398 form the tr-type G domain; the sequence is FLDLRVAVLG…LNILPPLTNS (229 aa). Residues 179–186, 260–264, and 316–319 each bind GTP; these read GNVDSGKS, DLAGH, and SKVD.

It belongs to the TRAFAC class translation factor GTPase superfamily. Classic translation factor GTPase family. GTPBP1 subfamily. Predominantly expressed in thymus, spleen, and testis. Expressed at lower levels in brain, heart, lung, kidney, and skeletal muscle. In testis, specifically expressed in spermatocytes and round spermatids.

The sequence is that of GTP-binding protein 2 from Mus musculus (Mouse).